We begin with the raw amino-acid sequence, 192 residues long: uncharacterized protein (192 aa).

It to M.thermoautotrophicum MTH863.

This is an uncharacterized protein from Methanocaldococcus jannaschii (strain ATCC 43067 / DSM 2661 / JAL-1 / JCM 10045 / NBRC 100440) (Methanococcus jannaschii).